The chain runs to 116 residues: U11-theraphotoxin-Hhn1b (116 aa).

An N-terminal signal peptide occupies residues 1–21 (MNTVRVAFLLVFVLAVSLGQA). The propeptide occupies 22–74 (DKDENRMEMQEKTEQGKSYLDFAENLLLQKLEELEAKLLEEDSEESRNSRQKR). Residues 61–83 (EEDSEESRNSRQKRCIGEGVPCD) form a disordered region. Disulfide bonds link Cys-75–Cys-90, Cys-82–Cys-95, and Cys-89–Cys-110.

Belongs to the neurotoxin 14 (magi-1) family. 01 (HNTX-16) subfamily. As to expression, expressed by the venom gland.

The protein localises to the secreted. Its function is as follows. Probable ion channel inhibitor. The polypeptide is U11-theraphotoxin-Hhn1b (Cyriopagopus hainanus (Chinese bird spider)).